The following is an 856-amino-acid chain: Dual specificity protein kinase TTK (856 aa).

Position 1 is an N-acetylmethionine (M1). Residue S7 is modified to Phosphoserine. Phosphothreonine is present on T33. Phosphoserine is present on residues S37, S80, S281, S317, and S321. A Phosphothreonine modification is found at T360. S363 is subject to Phosphoserine. A disordered region spans residues E369 to K392. 3 positions are modified to phosphoserine: S393, S435, and S454. A Protein kinase domain is found at Y524–V790. ATP contacts are provided by residues I530–V538 and K552. D646 functions as the Proton acceptor in the catalytic mechanism. S820 carries the post-translational modification Phosphoserine. Over residues Y835–S846 the composition is skewed to low complexity. A disordered region spans residues Y835 to K856.

It belongs to the protein kinase superfamily. Ser/Thr protein kinase family. In terms of assembly, interacts with TPR; the interactions occurs in a microtubule-independent manner. Interacts with MAD1L1 and MAD2L1.

It catalyses the reaction L-seryl-[protein] + ATP = O-phospho-L-seryl-[protein] + ADP + H(+). The enzyme catalyses L-threonyl-[protein] + ATP = O-phospho-L-threonyl-[protein] + ADP + H(+). The catalysed reaction is L-tyrosyl-[protein] + ATP = O-phospho-L-tyrosyl-[protein] + ADP + H(+). Its activity is regulated as follows. Inhibited by the ATP-competitive kinase inhibitor, SP600125. Its function is as follows. Involved in mitotic spindle assembly checkpoint signaling, a process that delays anaphase until chromosomes are bioriented on the spindle, and in the repair of incorrect mitotic kinetochore-spindle microtubule attachments. Phosphorylates MAD1L1 to promote the mitotic spindle assembly checkpoint. Phosphorylates CDCA8/Borealin leading to enhanced AURKB activity at the kinetochore. Phosphorylates SKA3 at 'Ser-34' leading to dissociation of the SKA complex from microtubules and destabilization of microtubule-kinetochore attachments. Phosphorylates KNL1, KNTC1 and autophosphorylates. Phosphorylates MCRS1 which enhances recruitment of KIF2A to the minus end of spindle microtubules and promotes chromosome alignment. This chain is Dual specificity protein kinase TTK (TTK), found in Macaca fascicularis (Crab-eating macaque).